Reading from the N-terminus, the 257-residue chain is MSDSIIVFDKVKKAYGNFTVINELDFEVRRGEKVSIIGPSGSGKSTVLRILMTLEGINDGAVYVGGEPLWHELKNGSMMPATEKHLRKMRTQLGMVFQQFNLFPHMTVLRNLTEAPRVVLGLSKEEARRRAEELLELVGLVDHAHKFPAQLSGGQQQRVGIARALAMRPKIMLFDEPTSALDPELVGEVLNVIRRLAAEHDLTMLMVTHEMRFAREISDRVCFFDKGRIREEGTPEQLFSQPKEERTREFLKAVLDG.

The ABC transporter domain maps to 6-251 (IVFDKVKKAY…PKEERTREFL (246 aa)). 38-45 (GPSGSGKS) provides a ligand contact to ATP.

The protein belongs to the ABC transporter superfamily.

Its subcellular location is the cell inner membrane. Its function is as follows. Probably part of a binding-protein-dependent transport system y4tEFGH for an amino acid. Probably responsible for energy coupling to the transport system. This Sinorhizobium fredii (strain NBRC 101917 / NGR234) protein is Probable amino-acid ABC transporter ATP-binding protein y4tH.